Here is a 335-residue protein sequence, read N- to C-terminus: MSRITLSRFLIEQQRKAGTLPPELRLLIETVGRACKAISYSVNKGALADVLGEAGTGNIQGEAQKKLDVIANDFLLDANEWGGSLAAMASEEMELPYHIPGEYPKGEYLLMFDPLDGSSNIDVNISVGTIFSILRCPEGVTQPTETDFLQPGTHQVAAGYTVYGPQTMLVLTFGSGVHGFTLDREHGSFVLTHPDMKVPERTAEFAINMSNMRHWEAPVRRYVEEMLAGKTGPRGRDFNMRWVASMVAEVHRIITRGGIFMYPKDARDPSKAGKLRLMYEGNPMAFIIEQAGGAATNGHQRILDIVPTKLHERVAVFLGSKEEVELVTRYHSEQQ.

Mg(2+) contacts are provided by Glu-91, Asp-113, Leu-115, and Asp-116. Substrate is bound by residues 116–119, Asn-208, and Lys-274; that span reads DGSS. Residue Glu-280 participates in Mg(2+) binding.

This sequence belongs to the FBPase class 1 family. In terms of assembly, homotetramer. It depends on Mg(2+) as a cofactor.

It localises to the cytoplasm. The enzyme catalyses beta-D-fructose 1,6-bisphosphate + H2O = beta-D-fructose 6-phosphate + phosphate. The protein operates within carbohydrate biosynthesis; gluconeogenesis. The sequence is that of Fructose-1,6-bisphosphatase class 1 from Chromobacterium violaceum (strain ATCC 12472 / DSM 30191 / JCM 1249 / CCUG 213 / NBRC 12614 / NCIMB 9131 / NCTC 9757 / MK).